Here is a 902-residue protein sequence, read N- to C-terminus: Cytosolic 10-formyltetrahydrofolate dehydrogenase (902 aa).

A hydrolase domain region spans residues 1–310; the sequence is MKIAVIGQSL…LASNFFKGAA (310 aa). S9 bears the Phosphoserine mark. K38 is modified (N6-succinyllysine). 88–90 serves as a coordination point for (6R)-10-formyltetrahydrofolate; that stretch reads QFI. H106 (proton donor) is an active-site residue. A (6R)-10-formyltetrahydrofolate-binding site is contributed by D142. Residues 318–395 enclose the Carrier domain; the sequence is EAELVTAEAV…DFIQLLVRKL (78 aa). S354 bears the O-(pantetheine 4'-phosphoryl)serine mark. The interval 417-902 is aldehyde dehydrogenase domain; sequence TVRMPHQLFI…LRVKTVTFEY (486 aa). NADP(+) contacts are provided by residues 571–573 and 597–600; these read IPW and KPAQ. A phosphoserine mark is found at S629 and S631. NADP(+) contacts are provided by residues 630 to 635 and 650 to 651; these read GSLVGQ and GS. K660 is modified (N6-succinyllysine). Residue E673 is the Proton acceptor of the active site. 673–674 contacts NADP(+); the sequence is EL. The Proton donor role is filled by C707. Residue K757 participates in NADP(+) binding. Position 767 is an N6-succinyllysine (K767). 804–806 lines the NADP(+) pocket; the sequence is ESF. At S825 the chain carries Phosphoserine. K882 carries the N6-acetyllysine modification.

It in the N-terminal section; belongs to the GART family. The protein in the C-terminal section; belongs to the aldehyde dehydrogenase family. ALDH1L subfamily. As to quaternary structure, homotetramer. In terms of processing, phosphopantetheinylation at Ser-354 by AASDHPPT is required for the formyltetrahydrofolate dehydrogenase activity. Highly expressed in liver, pancreas and kidney.

Its subcellular location is the cytoplasm. It is found in the cytosol. The enzyme catalyses (6R)-10-formyltetrahydrofolate + NADP(+) + H2O = (6S)-5,6,7,8-tetrahydrofolate + CO2 + NADPH + H(+). Its function is as follows. Cytosolic 10-formyltetrahydrofolate dehydrogenase that catalyzes the NADP(+)-dependent conversion of 10-formyltetrahydrofolate to tetrahydrofolate and carbon dioxide. May also have an NADP(+)-dependent aldehyde dehydrogenase activity towards formaldehyde, acetaldehyde, propionaldehyde, and benzaldehyde. This chain is Cytosolic 10-formyltetrahydrofolate dehydrogenase, found in Homo sapiens (Human).